The chain runs to 689 residues: Glycine--tRNA ligase beta subunit (689 aa).

Belongs to the class-II aminoacyl-tRNA synthetase family. In terms of assembly, tetramer of two alpha and two beta subunits.

It is found in the cytoplasm. The enzyme catalyses tRNA(Gly) + glycine + ATP = glycyl-tRNA(Gly) + AMP + diphosphate. This chain is Glycine--tRNA ligase beta subunit, found in Photobacterium profundum (strain SS9).